Consider the following 68-residue polypeptide: Lipopolysaccharide export system ATP-binding protein LptB (68 aa).

It belongs to the ABC transporter superfamily. Outer membrane lipopolysaccharide export (TC 1.B.42) family. In terms of assembly, component of the lipopolysaccharide transport and assembly complex. The LptBFG transporter is composed of two ATP-binding proteins (LptB) and two transmembrane proteins (LptF and LptG).

Its subcellular location is the cytoplasm. It localises to the cell inner membrane. Part of the ABC transporter complex LptBFG involved in the translocation of lipopolysaccharide (LPS) from the inner membrane to the outer membrane. Probably responsible for energy coupling to the transport system. In Klebsiella oxytoca, this protein is Lipopolysaccharide export system ATP-binding protein LptB (lptB).